A 379-amino-acid chain; its full sequence is UDP-N-acetylglucosamine--N-acetylmuramyl-(pentapeptide) pyrophosphoryl-undecaprenol N-acetylglucosamine transferase (379 aa).

UDP-N-acetyl-alpha-D-glucosamine is bound by residues 19–21 (TGG), N133, R174, S207, I261, and Q306.

The protein belongs to the glycosyltransferase 28 family. MurG subfamily.

The protein localises to the cell inner membrane. It carries out the reaction di-trans,octa-cis-undecaprenyl diphospho-N-acetyl-alpha-D-muramoyl-L-alanyl-D-glutamyl-meso-2,6-diaminopimeloyl-D-alanyl-D-alanine + UDP-N-acetyl-alpha-D-glucosamine = di-trans,octa-cis-undecaprenyl diphospho-[N-acetyl-alpha-D-glucosaminyl-(1-&gt;4)]-N-acetyl-alpha-D-muramoyl-L-alanyl-D-glutamyl-meso-2,6-diaminopimeloyl-D-alanyl-D-alanine + UDP + H(+). It functions in the pathway cell wall biogenesis; peptidoglycan biosynthesis. Functionally, cell wall formation. Catalyzes the transfer of a GlcNAc subunit on undecaprenyl-pyrophosphoryl-MurNAc-pentapeptide (lipid intermediate I) to form undecaprenyl-pyrophosphoryl-MurNAc-(pentapeptide)GlcNAc (lipid intermediate II). The protein is UDP-N-acetylglucosamine--N-acetylmuramyl-(pentapeptide) pyrophosphoryl-undecaprenol N-acetylglucosamine transferase of Porphyromonas gingivalis (strain ATCC BAA-308 / W83).